A 339-amino-acid chain; its full sequence is Oncoprotein MEQ (339 aa).

Residues 1–80 (MSQEPEPGAM…ARRRRRKQTD (80 aa)) are disordered. Phosphoserine; by host CDK2 is present on serine 42. The basic motif stretch occupies residues 57-84 (KQKLERRRKRNRDAARRRRRKQTDYVDK). Residues 57-120 (KQKLERRRKR…TSLRVQLACH (64 aa)) enclose the bZIP domain. Over residues 60–77 (LERRRKRNRDAARRRRRK) the composition is skewed to basic residues. A Nuclear localization signal motif is present at residues 62 to 78 (RRRKRNRDAARRRRRKQ). Residues 85 to 113 (LHEACEELQRANEHLRKEIRDLRTECTSL) form a leucine-zipper region. The segment at 120-339 (HEPVCPMAVP…VWWFPGDGRP (220 aa)) is transactivation domain. The span at 145–160 (PEPPICTPPPPSPDEP) shows a compositional bias: pro residues. Positions 145 to 172 (PEPPICTPPPPSPDEPNAPHCSGSQPPI) are disordered.

This sequence belongs to the bZIP family. Jun subfamily. As to quaternary structure, homodimer. Interacts with host JUN; this interaction allows MEQ to engage in host cell processes by disguising itself as a cellular JUN. Phosphorylated by host CDK2; this phosphorylation greatly reduces the DNA binding activity of MEQ.

The protein localises to the host nucleus. Its subcellular location is the host nucleolus. Functions as a DNA-binding transcription factor. Promotes transformation, host cell growth, host cell-cycle progression through G1/S phase, and possesses antiapoptotic activity. Forms functional heterodimers with host JUN. These heterodimers bind with high affinity DNA sequences called MEQ-responsive elements MERE I (TGACA/GTCA), while MEQ homodimers bind a second type of sites termed MERE II (ACACA). Both homo and heterodimerization of MEQ are required for oncogenesis. The protein is Oncoprotein MEQ (MDV005) of Gallid herpesvirus 2 (strain Chicken/Md5/ATCC VR-987) (GaHV-2).